A 562-amino-acid polypeptide reads, in one-letter code: Phosphoenolpyruvate carboxykinase (ATP) (562 aa).

Residue 265–272 participates in ATP binding; the sequence is GLSGTGKT.

The protein belongs to the phosphoenolpyruvate carboxykinase (ATP) family.

The enzyme catalyses oxaloacetate + ATP = phosphoenolpyruvate + ADP + CO2. It functions in the pathway carbohydrate biosynthesis; gluconeogenesis. The chain is Phosphoenolpyruvate carboxykinase (ATP) (pckA) from Dictyostelium discoideum (Social amoeba).